We begin with the raw amino-acid sequence, 77 residues long: DNA-directed RNA polymerase subunit omega (77 aa).

It belongs to the RNA polymerase subunit omega family. The RNAP catalytic core consists of 2 alpha, 1 beta, 1 beta' and 1 omega subunit. When a sigma factor is associated with the core the holoenzyme is formed, which can initiate transcription.

It carries out the reaction RNA(n) + a ribonucleoside 5'-triphosphate = RNA(n+1) + diphosphate. In terms of biological role, promotes RNA polymerase assembly. Latches the N- and C-terminal regions of the beta' subunit thereby facilitating its interaction with the beta and alpha subunits. This chain is DNA-directed RNA polymerase subunit omega, found in Nitratidesulfovibrio vulgaris (strain ATCC 29579 / DSM 644 / CCUG 34227 / NCIMB 8303 / VKM B-1760 / Hildenborough) (Desulfovibrio vulgaris).